The following is a 180-amino-acid chain: 20 kDa protein (180 aa).

As to quaternary structure, interacts with Hsp70h.

Its subcellular location is the virion. Involved in systemic transport. Necessary for long-distance transport of the virus through the phloem. In Beet yellows virus (isolate Ukraine) (BYV), this protein is 20 kDa protein.